A 137-amino-acid polypeptide reads, in one-letter code: MLQPKKTKFRKAHKGRVHGLAYRGSSLSFGQFGLKAMATARITARQIEAARRAMTRHIKRGGRVWIRIFPDVPVSQKPAEVRQGKGKGSPEFWIARVKPGRILYEMEGVDEQLAREAMQRAAAKLPVKTKFIVREGG.

Belongs to the universal ribosomal protein uL16 family. In terms of assembly, part of the 50S ribosomal subunit.

Binds 23S rRNA and is also seen to make contacts with the A and possibly P site tRNAs. The chain is Large ribosomal subunit protein uL16 from Magnetococcus marinus (strain ATCC BAA-1437 / JCM 17883 / MC-1).